The chain runs to 381 residues: Fe-S cluster assembly protein DRE2 (381 aa).

An N-terminal SAM-like domain region spans residues 8-165 (AQGSGRFLLL…KPDFGAQQAV (158 aa)). The tract at residues 100–134 (RNRDNQIWGSGSDSAAGLGSSDGDGGGGEKMSSSE) is disordered. A compositionally biased stretch (low complexity) spans 108–118 (GSGSDSAAGLG). A compositionally biased stretch (gly residues) spans 119–128 (SSDGDGGGGE). The tract at residues 166 to 273 (PLKLGRKKNL…EEELLGEYDM (108 aa)) is linker. 4 residues coordinate [2Fe-2S] cluster: cysteine 283, cysteine 294, cysteine 297, and cysteine 299. Residues 283–299 (CRPKAGKRRRACKDCTC) are fe-S binding site A. Residues cysteine 344, cysteine 347, cysteine 355, and cysteine 358 each coordinate [4Fe-4S] cluster. 2 short sequence motifs (cx2C motif) span residues 344-347 (CGNC) and 355-358 (CDGC). A fe-S binding site B region spans residues 344-358 (CGNCALGDAFRCDGC).

The protein belongs to the anamorsin family. In terms of assembly, monomer. Interacts with TAH18. Interacts with MIA40. The cofactor is [2Fe-2S] cluster. It depends on [4Fe-4S] cluster as a cofactor.

The protein resides in the cytoplasm. It is found in the mitochondrion intermembrane space. Functionally, component of the cytosolic iron-sulfur (Fe-S) protein assembly (CIA) machinery required for the maturation of extramitochondrial Fe-S proteins. Part of an electron transfer chain functioning in an early step of cytosolic Fe-S biogenesis, facilitating the de novo assembly of a [4Fe-4S] cluster on the scaffold complex CFD1-NBP35. Electrons are transferred to DRE2 from NADPH via the FAD- and FMN-containing protein TAH18. TAH18-DRE2 are also required for the assembly of the diferric tyrosyl radical cofactor of ribonucleotide reductase (RNR), probably by providing electrons for reduction during radical cofactor maturation in the catalytic small subunit RNR2. The chain is Fe-S cluster assembly protein DRE2 from Paracoccidioides brasiliensis (strain Pb18).